Reading from the N-terminus, the 101-residue chain is Small ribosomal subunit protein uS14 (101 aa).

It belongs to the universal ribosomal protein uS14 family. As to quaternary structure, part of the 30S ribosomal subunit. Contacts proteins S3 and S10.

Its function is as follows. Binds 16S rRNA, required for the assembly of 30S particles and may also be responsible for determining the conformation of the 16S rRNA at the A site. This Bartonella henselae (strain ATCC 49882 / DSM 28221 / CCUG 30454 / Houston 1) (Rochalimaea henselae) protein is Small ribosomal subunit protein uS14.